The sequence spans 283 residues: Thymidylate synthase (283 aa).

Arg-22 is a binding site for dUMP. The active-site Nucleophile is Cys-160. DUMP is bound by residues 180–183 (RSCD), Asn-191, and 221–223 (HIY). Asp-183 serves as a coordination point for (6R)-5,10-methylene-5,6,7,8-tetrahydrofolate. Ser-282 serves as a coordination point for (6R)-5,10-methylene-5,6,7,8-tetrahydrofolate.

The protein belongs to the thymidylate synthase family. Bacterial-type ThyA subfamily. As to quaternary structure, homodimer.

Its subcellular location is the cytoplasm. It catalyses the reaction dUMP + (6R)-5,10-methylene-5,6,7,8-tetrahydrofolate = 7,8-dihydrofolate + dTMP. Its pathway is pyrimidine metabolism; dTTP biosynthesis. Catalyzes the reductive methylation of 2'-deoxyuridine-5'-monophosphate (dUMP) to 2'-deoxythymidine-5'-monophosphate (dTMP) while utilizing 5,10-methylenetetrahydrofolate (mTHF) as the methyl donor and reductant in the reaction, yielding dihydrofolate (DHF) as a by-product. This enzymatic reaction provides an intracellular de novo source of dTMP, an essential precursor for DNA biosynthesis. This is Thymidylate synthase from Pseudoalteromonas translucida (strain TAC 125).